Consider the following 322-residue polypeptide: CRISPR-associated protein Cas1 1 (322 aa).

The Mn(2+) site is built by E149, H214, and E229.

This sequence belongs to the CRISPR-associated endonuclease Cas1 family. Homodimer, forms a heterotetramer with a Cas2 homodimer. Requires Mg(2+) as cofactor. Mn(2+) is required as a cofactor.

Functionally, CRISPR (clustered regularly interspaced short palindromic repeat), is an adaptive immune system that provides protection against mobile genetic elements (viruses, transposable elements and conjugative plasmids). CRISPR clusters contain spacers, sequences complementary to antecedent mobile elements, and target invading nucleic acids. CRISPR clusters are transcribed and processed into CRISPR RNA (crRNA). Acts as a dsDNA endonuclease. Involved in the integration of spacer DNA into the CRISPR cassette. In Methanobrevibacter ruminantium (strain ATCC 35063 / DSM 1093 / JCM 13430 / OCM 146 / M1) (Methanobacterium ruminantium), this protein is CRISPR-associated protein Cas1 1.